The primary structure comprises 443 residues: Thymidine phosphorylase (443 aa).

It belongs to the thymidine/pyrimidine-nucleoside phosphorylase family. Homodimer.

It carries out the reaction thymidine + phosphate = 2-deoxy-alpha-D-ribose 1-phosphate + thymine. It participates in pyrimidine metabolism; dTMP biosynthesis via salvage pathway; dTMP from thymine: step 1/2. In terms of biological role, the enzymes which catalyze the reversible phosphorolysis of pyrimidine nucleosides are involved in the degradation of these compounds and in their utilization as carbon and energy sources, or in the rescue of pyrimidine bases for nucleotide synthesis. The chain is Thymidine phosphorylase from Aliivibrio salmonicida (strain LFI1238) (Vibrio salmonicida (strain LFI1238)).